The sequence spans 217 residues: C-type lectin domain family 2 member I (217 aa).

Topologically, residues 1–53 (MPDCLETGEKLFVHNMNAQCVQKPEEGNGPLGTGGKIVQGKCFRIISTVSPVK) are cytoplasmic. Residues 54–74 (LYCCYGVIMVLTVAVIALSVA) form a helical; Signal-anchor for type II membrane protein membrane-spanning segment. The Extracellular portion of the chain corresponds to 75-217 (LSTKKTEQII…YNLHCQTPPV (143 aa)). Cysteines 92 and 103 form a disulfide. The 105-residue stretch at 99 to 203 (VGNKCFYFSG…SYINRMWICS (105 aa)) folds into the C-type lectin domain. An N-linked (GlcNAc...) asparagine glycan is attached at N112. A disulfide bond links C120 and C202.

Detected in osteoblasts, growth plate chondrocytes and skeletal muscle overlying the bone (at protein level). Detected in spleen, B-cells, dendritic cells, thymus, and in IL2-activated natural killer cells.

The protein localises to the cell membrane. Its function is as follows. Inhibits osteoclast formation. Receptor for KLRB1F. Enhances T-cell activation. Plays a role in splenocyte activation, T-cell responses and IL-2 production. In Mus musculus (Mouse), this protein is C-type lectin domain family 2 member I (Clec2i).